The following is a 749-amino-acid chain: Amyloid-beta A4 precursor protein-binding family A member 2 (749 aa).

Disordered stretches follow at residues 1-94 (MAHQ…PEEE) and 130-343 (DTDE…NNIP). Ser11 carries the post-translational modification Phosphoserine. The segment covering 70 to 80 (GDSSSDYVNNT) has biased composition (polar residues). 2 stretches are compositionally biased toward acidic residues: residues 81-94 (SEEE…PEEE) and 131-142 (TDECQEAVEEWT). An STXBP1-binding region spans residues 185–270 (HYCASKEGYQ…SAEACPPIKA (86 aa)). Ser208 carries the phosphoserine modification. The segment covering 218 to 227 (DLEDQEEDID) has biased composition (acidic residues). Over residues 237–247 (LSMTSITSASE) the composition is skewed to polar residues. Over residues 305-315 (RTPEERPKWPH) the composition is skewed to basic and acidic residues. In terms of domain architecture, PID spans 366 to 555 (LIDGIIFAAN…IINTQEMYND (190 aa)). PDZ domains follow at residues 568–653 (ELQL…NIVS) and 659–735 (TVLI…MPAA).

As to quaternary structure, part of a multimeric complex containing STXBP1 and syntaxin-1. Binds to the cytoplasmic domain of amyloid-beta protein, and to the nuclear factor NF-kappa-B/p65 via its PDZ domain. Interacts with the N-terminal domain of NECAB3.

Its function is as follows. Putative function in synaptic vesicle exocytosis by binding to STXBP1, an essential component of the synaptic vesicle exocytotic machinery. May modulate processing of the amyloid-beta precursor protein (APP) and hence formation of APP-beta. The sequence is that of Amyloid-beta A4 precursor protein-binding family A member 2 (APBA2) from Pongo abelii (Sumatran orangutan).